We begin with the raw amino-acid sequence, 534 residues long: Protein FAM83D (534 aa).

Disordered stretches follow at residues 320–372 (TPPS…STLG) and 501–534 (GLNR…RGLQ). Residues 329-342 (TKPQAERLTSTPAR) show a composition bias toward polar residues. Positions 350–362 (RMNKDIEEPDRKS) are enriched in basic and acidic residues. The span at 511-520 (EARQPNTNID) shows a compositional bias: polar residues.

It belongs to the FAM83 family.

It localises to the cytoplasm. Its subcellular location is the cytoskeleton. The protein resides in the spindle. It is found in the spindle pole. May regulate cell proliferation, growth, migration and epithelial to mesenchymal transition. May also be important for proper chromosome congression and alignment during mitosis. The polypeptide is Protein FAM83D (Danio rerio (Zebrafish)).